We begin with the raw amino-acid sequence, 910 residues long: Dynein axonemal assembly factor 1 homolog (910 aa).

5 LRR repeats span residues 43-64 (GLKC…DHQS), 65-86 (QLRC…QHCK), 87-108 (QLDT…GSDI), 111-132 (VLNT…AELR), and 136-157 (FVSV…KVLA). An LRRCT domain is found at 171–209 (PVVNDIPSYRKTLILECKSLTYLDSRPVFDKDRACAEAW). Residues 217 to 230 (ERKEHQRWKKEEQR) are compositionally biased toward basic and acidic residues. 6 disordered regions span residues 217 to 275 (ERKE…GDFE), 297 to 332 (TKGD…DPTL), 344 to 399 (SRAC…GSIL), 620 to 642 (EQVP…PVDQ), 662 to 682 (QVEV…IPEE), and 855 to 910 (EELE…QGDH). The segment covering 314–331 (STNSVDYITGSDSNSDPT) has biased composition (polar residues). Positions 380–389 (SLSDSSSSSS) are enriched in low complexity. The segment covering 620–633 (EQVPDEVEANDKAS) has biased composition (basic and acidic residues). Residues 855-865 (EELEELNEEED) show a composition bias toward acidic residues. Residues 866–878 (PALKEAGDFKHDE) show a composition bias toward basic and acidic residues.

It belongs to the DNAAF1 family.

Its subcellular location is the cell projection. It is found in the cilium. Cilium-specific protein required for cilia structures. The polypeptide is Dynein axonemal assembly factor 1 homolog (Anopheles gambiae (African malaria mosquito)).